The following is a 502-amino-acid chain: TNF receptor-associated factor family protein DDB_G0268444 (502 aa).

Residues 28 to 68 (CSICYESVYKKEIYQCKEIHWFCKTCWAESLFKKKECMICR) form an RING-type; degenerate zinc finger. 2 TRAF-type zinc fingers span residues 129 to 183 (KHLK…SRSL) and 185 to 243 (NHYK…PKSN). Positions 261–295 (IESQSLQIKETNIKYENLLNKINKLEQLETESKCD) form a coiled coil. Residues 368-489 (KYKNRWSISN…DDSLVIDFSI (122 aa)) form the MATH domain.

The protein belongs to the TNF receptor-associated factor family. A subfamily.

The protein resides in the cytoplasm. Functionally, probable adapter protein and signal transducer that links members of the tumor necrosis factor receptor family to different signaling pathways by association with the receptor cytoplasmic domain and kinases. The protein is TNF receptor-associated factor family protein DDB_G0268444 of Dictyostelium discoideum (Social amoeba).